The following is a 361-amino-acid chain: Glycerophosphodiester phosphodiesterase GDPD1, chloroplastic (361 aa).

Residues 1–53 (MSLKAIHVSEVPSLDHFPENPSLICSSRKANNKFVVVGHRGHGMNMSQSPDLR) constitute a chloroplast transit peptide. The 270-residue stretch at 54–323 (FSALKENSIL…DHVEEITEAV (270 aa)) folds into the GP-PDE domain.

Belongs to the glycerophosphoryl diester phosphodiesterase family. It depends on Mg(2+) as a cofactor. Expressed in roots, shoots, rosette leaves, stems, flowers and siliques.

It localises to the plastid. Its subcellular location is the chloroplast. The enzyme catalyses a sn-glycero-3-phosphodiester + H2O = an alcohol + sn-glycerol 3-phosphate + H(+). Hydrolyzes glycerolphosphoglycerol, glycerophosphocholine and glycerophosphoethanolamine in vitro. May be involved in release of inorganic phosphate (Pi) from phospholipids during Pi starvation. The protein is Glycerophosphodiester phosphodiesterase GDPD1, chloroplastic of Arabidopsis thaliana (Mouse-ear cress).